We begin with the raw amino-acid sequence, 1099 residues long: MTAASTSKWGLVTNVVNSIVGVSVLTMPFCFKQCGIVLGALLLVFCSWMTHQSCMFLVKSASLSKRRTYAGLAFHAYGKAGKMLVETSMIGLMLGSCITFYVVIGDLGSNFFAPLLGLQVTRTFRVFLLFAVSLCIVLPLSLQRNMMASIQSFSAMALLFYTVFMFVIVLSSFKHGLFSGQWLQRVSYIRWEGVFRCVPIFGMSFACQSQVLPTYDSLDEPSVKTMSSIFASSLNVVTAFYVMVGFFGYVSFTDATTGNVLIHFPSNLVTEMIRVGFVMSVAVGFPMMILPCRQALNTLLFEQQQKDGTFAAGGYMPPLRFKVLTLSVVFGTMVGGVMIPNVETILGFTGATMGSLICFICPALIYKKAHKNAPSAQVVLWVGLGILVVSTLTTLSVSEEAPLDLTQGARSGQRGDAEGAMKVEAARLSVQDPVVVMAEDSQEKLKPAEDKEVLEQAQIKGPVDVPGGDTPKEKQEAAQLDRPGQGIAVPMGEAHRHEPPIPHDKVVVDEGQDQEGPEEKKPPPKLPDEGDPAGRGQGAPLLPESEKKQDPERGEEGKRPEQVLAVGEIERPQKIPEANGQPPVQPRKEDSRPGNRDLHPVPQARVSVELNDLVAGEGKESAQKAGGAPWKPMESAVESNIGGKAGLAVQRPEAAEQREKNEAEQPGGDQAGSKLEEAGRAEMLDHAVLLQVIKEQQVQQKRLLDQQEKLLAVIEEQHKEIRQQRQEGEEDKPKPADMQPEPGAAVLRGQEEEAEHAGAPDEHAGETLEDNPSQPLQPVLGAPRGHPAPSQDKGQHPLEEVKVLAGRDLADLPAGGSDTEPHGASSKLREDQKGAALKVAEAVRKLVPGDLEPVHKPDPAEVPKSPEKQLAKEVARQRQDVFGEGSQERKETGKDAVAPGADTQKEAAQPLVGAEAEDSHSKSRHSEPTKVPASGPAGMGFQAQARFRQEPQVIFDKSQDSHPEVRSEGPRGVGIPAEEQHRGRGAAAMQEEKQRPDPNSGPKLAVPGDQKPENAKPNRDLKVQAGSDLRRRRRDLASPPEQELAPKDGVIISFNSLPNVQVNDLRSALDTQLRQAAGAALQVVHSRQIKQLSGDLEEA.

10 helical membrane-spanning segments follow: residues 9–31, 36–58, 84–104, 123–143, 153–173, 229–249, 272–292, 323–343, 345–365, and 378–398; these read WGLV…PFCF, IVLG…MFLV, LVET…YVVI, TFRV…LSLQ, FSAM…LSSF, IFAS…FFGY, MIRV…ILPC, VLTL…PNVE, ILGF…PALI, and VVLW…LSVS. 2 disordered regions span residues 440–679 and 720–1047; these read DSQE…EEAG and EIRQ…LAPK. The residue at position 441 (Ser441) is a Phosphoserine. Basic and acidic residues-rich tracts occupy residues 441-454, 493-508, 517-528, 544-561, and 586-599; these read SQEK…KEVL, EAHR…KVVV, PEEKKPPPKLPD, ESEK…KRPE, and PRKE…RDLH. Phosphoserine occurs at positions 607 and 635. 3 stretches are compositionally biased toward basic and acidic residues: residues 653 to 663, 720 to 735, and 749 to 766; these read EAAEQREKNEA, EIRQ…KPKP, and GQEE…HAGE. Residues 698 to 734 adopt a coiled-coil conformation; that stretch reads VQQKRLLDQQEKLLAVIEEQHKEIRQQRQEGEEDKPK. Thr767 bears the Phosphothreonine mark. Basic and acidic residues-rich tracts occupy residues 793 to 802, 852 to 894, 917 to 928, 957 to 969, and 1010 to 1022; these read KGQHPLEEVK, EPVH…ETGK, EDSHSKSRHSEP, KSQD…RSEG, and QKPE…RDLK. Ser886 carries the phosphoserine modification.

Belongs to the amino acid/polyamine transporter 2 family. As to expression, only expressed in the pituitary, adrenal gland, stomach and in the upper gastrointestinal tract.

The protein localises to the membrane. It carries out the reaction L-glutamate(out) = L-glutamate(in). The enzyme catalyses L-glutamine(out) = L-glutamine(in). It catalyses the reaction L-alanine(in) = L-alanine(out). The catalysed reaction is L-serine(in) = L-serine(out). It carries out the reaction L-leucine(in) = L-leucine(out). Facilitates bidirectional transport of amino acids. May act as a glutamate sensor that regulates glutamate-glutamine cycle and mTOR signaling in the brain. The transport mechanism remains to be elucidated. This Rattus norvegicus (Rat) protein is Solute carrier family 38 member 10.